A 194-amino-acid chain; its full sequence is Imidazoleglycerol-phosphate dehydratase (194 aa).

The protein belongs to the imidazoleglycerol-phosphate dehydratase family.

It is found in the cytoplasm. It carries out the reaction D-erythro-1-(imidazol-4-yl)glycerol 3-phosphate = 3-(imidazol-4-yl)-2-oxopropyl phosphate + H2O. It functions in the pathway amino-acid biosynthesis; L-histidine biosynthesis; L-histidine from 5-phospho-alpha-D-ribose 1-diphosphate: step 6/9. The chain is Imidazoleglycerol-phosphate dehydratase from Bacillus cereus (strain AH820).